The following is a 326-amino-acid chain: Membrane-associated kinase regulator 5 (326 aa).

Disordered regions lie at residues 188–239 and 267–326; these read TKKQ…GMSP and GSRE…KISD. Low complexity-rich tracts occupy residues 190-202 and 270-305; these read KQSSSTITSPTSS and ESSLLSRSTSESSSQEKLSTSSSEDSYLFSRISSDS.

In terms of tissue distribution, expressed in roots.

It localises to the cell membrane. It is found in the cytoplasm. The protein resides in the cytosol. Functionally, positive effector of CLE45 peptide signaling. Post-transcriptionally regulated amplifier of the CLE45 peptide signal that acts downstream of BAM3 in the regulation of the transition of root protophloem cells from proliferation to differentiation; thus preventing primary root elongation but stimulating lateral roots development. The polypeptide is Membrane-associated kinase regulator 5 (Arabidopsis thaliana (Mouse-ear cress)).